A 970-amino-acid polypeptide reads, in one-letter code: Anaphase-promoting complex subunit 3 (970 aa).

4 TPR repeats span residues 35 to 68 (EDNL…TMIK), 74 to 107 (ALSN…NNNN), 142 to 175 (NNNS…NSIS), and 185 to 218 (GSVY…YPFL). Residues 106-149 (NNNNNNNNNNNNNNNNNNNNNNNKDKCNNSNKNNDSNNNSNSNN) are disordered. Positions 274-300 (KVNNNNNNNNNNNNNINNNNSSNKNNE) are disordered. TPR repeat units lie at residues 319 to 353 (IKPN…TPIN) and 361 to 394 (TNQQ…TPQT). Disordered regions lie at residues 358 to 379 (IQQT…PSQQ), 414 to 525 (PIPM…TTTT), and 556 to 582 (SSLS…HNKS). Residues 359–379 (QQTNQQQQQQQQQQPQQPSQQ) are compositionally biased toward low complexity. Over residues 424–443 (SKGSQHPPSSNSQTPYTPST) the composition is skewed to polar residues. A compositionally biased stretch (basic residues) spans 446-460 (VHHHQKQQPHQHKKS). Low complexity predominate over residues 500–525 (TSSTSKQQQQQQQTKQQTTTTTTTTT). TPR repeat units lie at residues 546–580 (TEEF…HHHN), 636–671 (LELF…QYRT), 672–705 (GWVL…EPYR), 740–773 (PYSW…DPDM), 775–807 (YAYT…DPRH), 808–841 (YNAF…NESS), 843–876 (VLCC…QPKN), 878–910 (FAKF…EPKE), and 911–944 (TPIY…DPKN). Residues 570–580 (YQQHHHLHHHN) show a composition bias toward basic residues.

The protein belongs to the APC3/CDC27 family. The APC/C is composed of at least 13 subunits that stay tightly associated throughout the cell cycle: anapc1, anapc2, anapc3, anapc4, anapc5, anapc6, anapc7, anapc8, anapc10, anapc11, cdc20, cdc26 and cdh1.

It is found in the nucleus. Its pathway is protein modification; protein ubiquitination. Functionally, component of the anaphase promoting complex/cyclosome (APC/C), a cell cycle-regulated E3 ubiquitin-protein ligase complex that controls progression through mitosis and the G1 phase of the cell cycle. This chain is Anaphase-promoting complex subunit 3 (anapc3), found in Dictyostelium discoideum (Social amoeba).